A 312-amino-acid polypeptide reads, in one-letter code: Calcium-independent mitochondrial carrier protein SCaMC-3L (312 aa).

Solcar repeat units follow at residues 27 to 113 (GTLW…SKNF), 121 to 206 (QLFQ…LQCL), and 217 to 304 (PSGL…MKKT). A run of 6 helical transmembrane segments spans residues 33 to 50 (LLSG…TAPL), 88 to 107 (GNGI…FSVC), 131 to 144 (SLAV…INPM), 182 to 200 (YLPN…LAVY), 219 to 243 (GLVS…LTLV), and 279 to 298 (GMTP…YLVY).

Belongs to the mitochondrial carrier (TC 2.A.29) family. As to expression, mainly expressed in testis and at lesser levels in brain.

The protein resides in the mitochondrion inner membrane. The catalysed reaction is Mg(2+)(out) + phosphate(in) + ATP(out) = Mg(2+)(in) + phosphate(out) + ATP(in). It catalyses the reaction ADP(out) + phosphate(in) + H(+)(out) = ADP(in) + phosphate(out) + H(+)(in). Its function is as follows. Calcium-independent ATP-Mg/Pi exchanger that catalyzes the electroneutral exchange of Mg-ATP or free ADP against an hydrogenphosphate and participates in the net transport of adenine nucleotides across the mitochondria inner membrane. The polypeptide is Calcium-independent mitochondrial carrier protein SCaMC-3L (Mus musculus (Mouse)).